A 186-amino-acid polypeptide reads, in one-letter code: Peptide deformylase (186 aa).

Fe cation-binding residues include cysteine 113 and histidine 156. The active site involves glutamate 157. Histidine 160 is a binding site for Fe cation.

This sequence belongs to the polypeptide deformylase family. Requires Fe(2+) as cofactor.

It carries out the reaction N-terminal N-formyl-L-methionyl-[peptide] + H2O = N-terminal L-methionyl-[peptide] + formate. Removes the formyl group from the N-terminal Met of newly synthesized proteins. Requires at least a dipeptide for an efficient rate of reaction. N-terminal L-methionine is a prerequisite for activity but the enzyme has broad specificity at other positions. In Lactiplantibacillus plantarum (strain ATCC BAA-793 / NCIMB 8826 / WCFS1) (Lactobacillus plantarum), this protein is Peptide deformylase.